Reading from the N-terminus, the 351-residue chain is Photosystem II D2 protein (351 aa).

A helical membrane pass occupies residues 39–59; that stretch reads CAFLALGGWLTGTTFVTSWYT. Residue His-116 participates in chlorophyll a binding. A helical transmembrane segment spans residues 123 to 139; that stretch reads GFMLRQFEIARLVGIRP. Positions 128 and 141 each coordinate pheophytin a. A helical membrane pass occupies residues 151-164; the sequence is VFVSVFLMYPLGQS. His-196 provides a ligand contact to chlorophyll a. Residues 206-226 form a helical membrane-spanning segment; it reads GALLCAIHGATVENTLFEDGE. 2 residues coordinate a plastoquinone: His-213 and Phe-260. Position 213 (His-213) interacts with Fe cation. His-267 provides a ligand contact to Fe cation. A helical membrane pass occupies residues 277 to 293; sequence GLWMSAVGIVGLALNLR.

It belongs to the reaction center PufL/M/PsbA/D family. As to quaternary structure, PSII is composed of 1 copy each of membrane proteins PsbA, PsbB, PsbC, PsbD, PsbE, PsbF, PsbH, PsbI, PsbJ, PsbK, PsbL, PsbM, PsbT, PsbX, PsbY, PsbZ, Psb30/Ycf12, peripheral proteins PsbO, CyanoQ (PsbQ), PsbU, PsbV and a large number of cofactors. It forms dimeric complexes. The D1/D2 heterodimer binds P680, chlorophylls that are the primary electron donor of PSII, and subsequent electron acceptors. It shares a non-heme iron and each subunit binds pheophytin, quinone, additional chlorophylls, carotenoids and lipids. There is also a Cl(-1) ion associated with D1 and D2, which is required for oxygen evolution. The PSII complex binds additional chlorophylls, carotenoids and specific lipids. is required as a cofactor.

The protein resides in the cellular thylakoid membrane. The catalysed reaction is 2 a plastoquinone + 4 hnu + 2 H2O = 2 a plastoquinol + O2. Photosystem II (PSII) is a light-driven water:plastoquinone oxidoreductase that uses light energy to abstract electrons from H(2)O, generating O(2) and a proton gradient subsequently used for ATP formation. It consists of a core antenna complex that captures photons, and an electron transfer chain that converts photonic excitation into a charge separation. The D1/D2 (PsbA/PsbD) reaction center heterodimer binds P680, the primary electron donor of PSII as well as several subsequent electron acceptors. D2 is needed for assembly of a stable PSII complex. This Nostoc sp. (strain PCC 7120 / SAG 25.82 / UTEX 2576) protein is Photosystem II D2 protein.